We begin with the raw amino-acid sequence, 197 residues long: DNA helicase/primase complex protein (197 aa).

The protein belongs to the herpesviridae UL52 family.

Its function is as follows. Involved in DNA replication. The polypeptide is DNA helicase/primase complex protein (7) (Equus caballus (Horse)).